A 499-amino-acid polypeptide reads, in one-letter code: Lipopolysaccharide core galacturonosyltransferase RgtA (499 aa).

10 helical membrane-spanning segments follow: residues 11–31 (TAGLLLAAYFVLNIVLRIVLP), 74–94 (IGALIVPKNILLFLSYLFYGL), 103–123 (EALAAVGMLALITLPQVSYMA), 125–145 (QDLTHTTALLFASSLFLYGFF), 165–185 (IGLISKYNFALMPVVALIAIL), 199–219 (MLAAITVALVIVLPHAVWLQG), 248–268 (LLAFLVAIIAFAALPVVIFAA), 291–311 (MMLASLAGIALIVLFTGSTTV), 316–336 (LDPFLLVLPIYFLAKMQAAGL), and 351–371 (VLMACVLIALGFRVVGAGLIG).

The protein belongs to the glycosyltransferase 83 family.

It is found in the cell inner membrane. It functions in the pathway bacterial outer membrane biogenesis; LPS core biosynthesis. Its function is as follows. Involved in the modification of the lipopolysaccharide (LPS) inner core. Catalyzes the transfer of a galacturonic acid (GalA) residue to the 4-position of the outer Kdo (3-deoxy-D-manno-octulosonic acid) residue of the LPS inner core, using dodecaprenyl phosphate-GalA as the donor substrate. GalA addition by RgtA is required for RgtB activity. This chain is Lipopolysaccharide core galacturonosyltransferase RgtA, found in Rhizobium johnstonii (strain DSM 114642 / LMG 32736 / 3841) (Rhizobium leguminosarum bv. viciae).